The primary structure comprises 209 residues: Thiamine-phosphate synthase (209 aa).

4-amino-2-methyl-5-(diphosphooxymethyl)pyrimidine-binding positions include 41 to 45 (QLREK) and Asn73. The Mg(2+) site is built by Asp74 and Asp93. Ser112 contributes to the 4-amino-2-methyl-5-(diphosphooxymethyl)pyrimidine binding site. 138–140 (TGT) contacts 2-[(2R,5Z)-2-carboxy-4-methylthiazol-5(2H)-ylidene]ethyl phosphate. Residue Lys141 participates in 4-amino-2-methyl-5-(diphosphooxymethyl)pyrimidine binding. 2-[(2R,5Z)-2-carboxy-4-methylthiazol-5(2H)-ylidene]ethyl phosphate-binding positions include Gly168 and 188–189 (VS).

This sequence belongs to the thiamine-phosphate synthase family. Mg(2+) is required as a cofactor.

The enzyme catalyses 2-[(2R,5Z)-2-carboxy-4-methylthiazol-5(2H)-ylidene]ethyl phosphate + 4-amino-2-methyl-5-(diphosphooxymethyl)pyrimidine + 2 H(+) = thiamine phosphate + CO2 + diphosphate. It carries out the reaction 2-(2-carboxy-4-methylthiazol-5-yl)ethyl phosphate + 4-amino-2-methyl-5-(diphosphooxymethyl)pyrimidine + 2 H(+) = thiamine phosphate + CO2 + diphosphate. It catalyses the reaction 4-methyl-5-(2-phosphooxyethyl)-thiazole + 4-amino-2-methyl-5-(diphosphooxymethyl)pyrimidine + H(+) = thiamine phosphate + diphosphate. Its pathway is cofactor biosynthesis; thiamine diphosphate biosynthesis; thiamine phosphate from 4-amino-2-methyl-5-diphosphomethylpyrimidine and 4-methyl-5-(2-phosphoethyl)-thiazole: step 1/1. In terms of biological role, condenses 4-methyl-5-(beta-hydroxyethyl)thiazole monophosphate (THZ-P) and 2-methyl-4-amino-5-hydroxymethyl pyrimidine pyrophosphate (HMP-PP) to form thiamine monophosphate (TMP). The polypeptide is Thiamine-phosphate synthase (Alkaliphilus oremlandii (strain OhILAs) (Clostridium oremlandii (strain OhILAs))).